We begin with the raw amino-acid sequence, 880 residues long: MSSNPQYLSGNEIRNTFLNFFAQRSHQILPSASLVPEDPTVLLTIAGMLPFKPIFLGQRTPEFKRATTSQKCIRTNDIENVGRTKRHHTFFEMLGNFSFGDYFKEQAIAWGWEISTQVFGFSPQNLVVSVFEDDDEAFAIWRDQIGVPVARIKRLGEDDNFWVSGPTGPCGPCSEIYYDFHPERGDENIDLEDDSRFIEFYNLVFMQYNRDVLGNLTPLQNKNIDTGMGLERMAQILQKVPNNYETDLIFPIIQTAAQIAGIDYHSSDEKTKVSLKVIGDHVRSVVHMIADEIRASNVGRGYVLRRLIRRVVRHGRLIGISGEFTTQVAESAIALSESAYPNVRQREAAIKAELQREESNFLRTLDRGEKLLEEIIQEVKQQGSTQISGESAFTLYDTYGFPLELTQEVAEENNLTVDAEGFEAQMEIQKGRGRDAHETIDLTVQGSLDKLAEHIQVTEFLGYTQSAATAIIEAILLEGVSQEEAEAGTQVQIVLDKTPFYAESGGQIGDRGYISGDGIVVRVEDVKKESDFFVHFGRIERGTLRVGDRVTAQIDPACRRRAQANHTATHLLQAALKKIVDDGISQAGSLVSFDRLRFDFNCPRALTAEEVQQVEEQVNSWIAEAHAAKVEVLPLAEAKAKGAVAMFGEKYGDEVRVIDFPNVSMELCGGTHVSNTAEIGVFKIISEAGVASGVRRIEAVSGPAILDYLNLRDKVVKDLSDRFKVKPEELPDRITSLQSELRNSQKELETLKVQLAIAKSDSLLQTAETVGDHKIIVAQLENVDPESLKTAAERLLQKIGNGAVVLGSVPEADKVSIVAAFSPEVNKKGLQAGKFVGAIAKICGGGGGGRPNLAQAGGRDASKLPDALGQAESDLKSALA.

Positions 566, 570, 668, and 672 each coordinate Zn(2+).

It belongs to the class-II aminoacyl-tRNA synthetase family. Zn(2+) is required as a cofactor.

The protein resides in the cytoplasm. It carries out the reaction tRNA(Ala) + L-alanine + ATP = L-alanyl-tRNA(Ala) + AMP + diphosphate. Functionally, catalyzes the attachment of alanine to tRNA(Ala) in a two-step reaction: alanine is first activated by ATP to form Ala-AMP and then transferred to the acceptor end of tRNA(Ala). Also edits incorrectly charged Ser-tRNA(Ala) and Gly-tRNA(Ala) via its editing domain. The sequence is that of Alanine--tRNA ligase from Nostoc punctiforme (strain ATCC 29133 / PCC 73102).